The following is a 169-amino-acid chain: Glycine-rich RNA-binding protein 8 (169 aa).

The RRM domain maps to 6-84; the sequence is YRCFVGGLAW…RVITVNEAQS (79 aa). An ADP-ribosylarginine; by HopU1 modification is found at R47. The disordered stretch occupies residues 80–99; sequence NEAQSRGSGGGGGGRGGSGG. Over residues 86-99 the composition is skewed to gly residues; that stretch reads GSGGGGGGRGGSGG. The segment at 86–168 is glycine-rich (GR) required for cell-to-cell movement; that stretch reads GSGGGGGGRG…GGSYGGGGGG (83 aa). The tract at residues 95–143 is nuclear targeting sequence (M9); that stretch reads GGSGGGYRSGGGGGYSGGGGGGYSGGGGGGYERRSGGYGSGGGGGGRGY. At S103 the chain carries Phosphoserine. The disordered stretch occupies residues 130 to 169; the sequence is GGYGSGGGGGGRGYGGGGRREGGGYGGGDGGSYGGGGGGW.

Belongs to the GR-RBP family. As to quaternary structure, interacts with TRN1. Binds to small phloem-mobile single-stranded RNAs (ss-sRNA, e.g. small interfering RNA (siRNA) and microRNA (miRNA)) in the phloeme exudate, including viral-derived sRNA (vsiRNA). ADP-ribosylated by the Pseudomonas syringae type III effector HopU1. ADP-ribosylation reduces the ability of the protein to bind RNA. As to expression, ubiquitous.

It is found in the cytoplasm. The protein resides in the nucleus. It localises to the secreted. Its function is as follows. Plays a role in RNA transcription or processing during stress. Binds RNAs and DNAs sequence with a preference to single-stranded nucleic acids. Involved in mRNA alternative splicing of numerous targets by modulating splice site selection. Negatively regulates the circadian oscillations of its own transcript as well as RBG7 transcript. Forms an interlocked post-transcriptional negative feedback loop with the RBG7 autoregulatory circuit. Both proteins negatively autoregulate and reciprocally crossregulate by binding to their pre-mRNAs and promoting unproductive splicing coupled to degradation via the NMD pathway. Target of the Pseudomonas syringae type III effector HopU1. Mediates cell-to-cell trafficking of RNA interference (RNAi) signals (small RNAs (sRNA), e.g. small interfering RNA (siRNA) and microRNA (miRNA)) which regulate growth and development, as well as responses to environmental inputs, including pathogen attack; can compromise zucchini yellow mosaic virus (ZYMV) and tobacco rattle virus (TRV) infections at the early stage. This chain is Glycine-rich RNA-binding protein 8, found in Arabidopsis thaliana (Mouse-ear cress).